Reading from the N-terminus, the 440-residue chain is Chromosome partition protein MukF (440 aa).

Residues 208–236 (LSETSGTLRELQDTLEAAGDKLQANLLRI) form a leucine-zipper region.

It belongs to the MukF family. Interacts, and probably forms a ternary complex, with MukE and MukB via its C-terminal region. The complex formation is stimulated by calcium or magnesium. It is required for an interaction between MukE and MukB.

The protein localises to the cytoplasm. It is found in the nucleoid. In terms of biological role, involved in chromosome condensation, segregation and cell cycle progression. May participate in facilitating chromosome segregation by condensation DNA from both sides of a centrally located replisome during cell division. Not required for mini-F plasmid partitioning. Probably acts via its interaction with MukB and MukE. Overexpression results in anucleate cells. It has a calcium binding activity. In Salmonella arizonae (strain ATCC BAA-731 / CDC346-86 / RSK2980), this protein is Chromosome partition protein MukF.